Here is a 226-residue protein sequence, read N- to C-terminus: Urease accessory protein UreF (226 aa).

The protein belongs to the UreF family. As to quaternary structure, ureD, UreF and UreG form a complex that acts as a GTP-hydrolysis-dependent molecular chaperone, activating the urease apoprotein by helping to assemble the nickel containing metallocenter of UreC. The UreE protein probably delivers the nickel.

The protein localises to the cytoplasm. In terms of biological role, required for maturation of urease via the functional incorporation of the urease nickel metallocenter. The polypeptide is Urease accessory protein UreF (Burkholderia ambifaria (strain ATCC BAA-244 / DSM 16087 / CCUG 44356 / LMG 19182 / AMMD) (Burkholderia cepacia (strain AMMD))).